The primary structure comprises 441 residues: Transcriptional regulatory protein ZraR (441 aa).

In terms of domain architecture, Response regulatory spans 7–121 (DILVVDDDIS…NLQATLEKAL (115 aa)). 4-aspartylphosphate is present on D56. A Sigma-54 factor interaction domain is found at 141–370 (MVGKSPAMQH…LENAVERAVV (230 aa)). G172, T173, R329, and R359 together coordinate ATP. Positions 421 to 440 (KTEAARQLGITRKTLLAKLS) form a DNA-binding region, H-T-H motif.

As to quaternary structure, monomer. Phosphorylated by ZraS.

Its subcellular location is the cytoplasm. Activity of the ZraS/ZraR two-component system is repressed by the zinc-bound form of ZraP, which probably interacts with the periplasmic region of ZraS. In terms of biological role, part of the Zra signaling pathway, an envelope stress response (ESR) system composed of the periplasmic accessory protein ZraP, the histidine kinase ZraS and the transcriptional regulator ZraR. The ZraPSR system contributes to antibiotic resistance and is important for membrane integrity in the presence of membrane-targeting biocides. ZraR is a member of the two-component regulatory system ZraS/ZraR. When activated by ZraS, acts in conjunction with sigma-54 to regulate the expression of zraP in the presence of high Zn(2+) or Pb(2+) concentrations. Also positively autoregulates the expression of the zraSR operon. Binds to a region within the zraP-zraSR intergenic region that is characterized by two inverted repeats separated by a 14 bp spacer. In addition, controls a regulon of genes of diverse functions that may be critical to maintain envelope integrity and cell survival under stressful conditions. The system has no direct role in zinc or copper resistance. The polypeptide is Transcriptional regulatory protein ZraR (Escherichia coli (strain K12)).